The chain runs to 300 residues: Nucleotide-binding protein Dshi_0209 (300 aa).

Position 20 to 27 (20 to 27 (GPSGAGRT)) interacts with ATP. Residue 67–70 (DART) coordinates GTP.

Belongs to the RapZ-like family.

In terms of biological role, displays ATPase and GTPase activities. This is Nucleotide-binding protein Dshi_0209 from Dinoroseobacter shibae (strain DSM 16493 / NCIMB 14021 / DFL 12).